A 115-amino-acid chain; its full sequence is Meiotically up-regulated gene 42 protein (115 aa).

In terms of biological role, has a role in meiosis. This is Meiotically up-regulated gene 42 protein (mug42) from Schizosaccharomyces pombe (strain 972 / ATCC 24843) (Fission yeast).